The primary structure comprises 244 residues: Probable transcriptional regulatory protein DMR_30850 (244 aa).

It belongs to the TACO1 family.

The protein localises to the cytoplasm. This is Probable transcriptional regulatory protein DMR_30850 from Solidesulfovibrio magneticus (strain ATCC 700980 / DSM 13731 / RS-1) (Desulfovibrio magneticus).